The following is a 321-amino-acid chain: Lipoyl synthase (321 aa).

[4Fe-4S] cluster is bound by residues C68, C73, C79, C94, C98, C101, and S308. A Radical SAM core domain is found at F80 to T297.

Belongs to the radical SAM superfamily. Lipoyl synthase family. [4Fe-4S] cluster serves as cofactor.

The protein localises to the cytoplasm. The catalysed reaction is [[Fe-S] cluster scaffold protein carrying a second [4Fe-4S](2+) cluster] + N(6)-octanoyl-L-lysyl-[protein] + 2 oxidized [2Fe-2S]-[ferredoxin] + 2 S-adenosyl-L-methionine + 4 H(+) = [[Fe-S] cluster scaffold protein] + N(6)-[(R)-dihydrolipoyl]-L-lysyl-[protein] + 4 Fe(3+) + 2 hydrogen sulfide + 2 5'-deoxyadenosine + 2 L-methionine + 2 reduced [2Fe-2S]-[ferredoxin]. The protein operates within protein modification; protein lipoylation via endogenous pathway; protein N(6)-(lipoyl)lysine from octanoyl-[acyl-carrier-protein]: step 2/2. Catalyzes the radical-mediated insertion of two sulfur atoms into the C-6 and C-8 positions of the octanoyl moiety bound to the lipoyl domains of lipoate-dependent enzymes, thereby converting the octanoylated domains into lipoylated derivatives. This is Lipoyl synthase from Salmonella arizonae (strain ATCC BAA-731 / CDC346-86 / RSK2980).